Reading from the N-terminus, the 168-residue chain is Acetone carboxylase gamma subunit (168 aa).

Heterohexamer of two alpha, two beta and two gamma subunits. Fe cation serves as cofactor. Mg(2+) is required as a cofactor. The cofactor is Zn(2+).

It catalyses the reaction acetone + hydrogencarbonate + 2 ATP + 3 H2O = acetoacetate + 2 AMP + 4 phosphate + 4 H(+). Functionally, catalyzes the carboxylation of acetone to form acetoacetate. Has a reduced activity on butanone, and no activity on 2-pentatone, 3-pentatone, 2-hexanone, chloroacetone, pyruvate, phosphoenolpyruvate, acetaldehyde, propionaldehyde and propylene oxide. This Xanthobacter autotrophicus (strain ATCC BAA-1158 / Py2) protein is Acetone carboxylase gamma subunit.